We begin with the raw amino-acid sequence, 879 residues long: Metabotropic glutamate receptor 3 (879 aa).

The N-terminal stretch at Met-1–Ser-22 is a signal peptide. The Extracellular portion of the chain corresponds to Leu-23 to Trp-576. Cys-57 and Cys-99 are joined by a disulfide. L-glutamate contacts are provided by residues Arg-68, Ser-151, and Ala-172–Thr-174. N-linked (GlcNAc...) asparagine glycosylation is present at Asn-209. Tyr-222 lines the L-glutamate pocket. Disulfide bonds link Cys-240–Cys-527, Cys-361–Cys-373, Cys-412–Cys-419, Cys-509–Cys-528, Cys-513–Cys-531, Cys-534–Cys-546, and Cys-549–Cys-562. A glycan (N-linked (GlcNAc...) asparagine) is linked at Asn-292. Asp-301 provides a ligand contact to L-glutamate. Lys-389 is an L-glutamate binding site. Asn-414 and Asn-439 each carry an N-linked (GlcNAc...) asparagine glycan. The helical transmembrane segment at Ala-577–Ile-599 threads the bilayer. Residues Lys-600–Glu-613 lie on the Cytoplasmic side of the membrane. The chain crosses the membrane as a helical span at residues Leu-614–Ala-634. Topologically, residues Lys-635–Arg-645 are extracellular. Residues Leu-646–Asn-664 form a helical membrane-spanning segment. The Cytoplasmic portion of the chain corresponds to Cys-665–Gln-688. Residues Val-689–Leu-709 form a helical membrane-spanning segment. The Extracellular segment spans residues Glu-710–Asp-734. Residues Ser-735–Phe-756 form a helical membrane-spanning segment. Topologically, residues Lys-757 to Lys-769 are cytoplasmic. Residues Phe-770–Thr-792 traverse the membrane as a helical segment. Residues Ser-793–Thr-802 lie on the Extracellular side of the membrane. Residues Met-803 to Phe-828 traverse the membrane as a helical segment. At Gln-829 to Leu-879 the chain is on the cytoplasmic side.

The protein belongs to the G-protein coupled receptor 3 family. Interacts with TAMALIN. As to expression, is widely distributed in the CNS. Predominant expression is seen in the neuronal cells of the cerebral cortex, dentate gyrus, and glial cells throughout brain regions.

It is found in the cell membrane. In terms of biological role, G-protein coupled receptor for glutamate. Ligand binding causes a conformation change that triggers signaling via guanine nucleotide-binding proteins (G proteins) and modulates the activity of down-stream effectors. Signaling inhibits adenylate cyclase activity. The polypeptide is Metabotropic glutamate receptor 3 (Grm3) (Rattus norvegicus (Rat)).